The chain runs to 299 residues: MVGKARSSNFTLSEKLDLLNLVKPYVKILEEHTNKNSVIVEKNRCWDVIAVNYNAIGVDRPPRTAQGLRSLYKRLKEYAKQELLQQKEAQSEFKSSVSEPTKQVMEMIPQIASFGLIRDRSHIQSANLDETAQAGTSSLQVMVDHHPVAITVEVKQEEDIKPSPPLVSNPQLSDTLEQREEHELMHVVEGSESPSLSSVDMRMTSSPSSVPRRDEIFHQESGEHFRSLLRCDPQVLQMLKEEHQIILENQKNFGLYVQEKRDGLRRRQRLEEELLRAKIEVEKLKATRLRRDLPEYSSL.

Residue K94 forms a Glycyl lysine isopeptide (Lys-Gly) (interchain with G-Cter in SUMO2) linkage. A disordered region spans residues 189-211 (EGSESPSLSSVDMRMTSSPSSVP). Residues 192-209 (ESPSLSSVDMRMTSSPSS) show a composition bias toward polar residues.

Interacts with APBA1 (via PDZ 1 and 2 domains).

It localises to the nucleus. Its function is as follows. Transcriptional repressor that down-regulates the expression of the fibrinogen gamma chain. Represses transcription of GSK3B gene promoter via its interaction with APBA1. The polypeptide is Fibrinogen silencer-binding protein (Fsbp) (Mus musculus (Mouse)).